A 322-amino-acid polypeptide reads, in one-letter code: Arginase-1 (322 aa).

The tract at residues 1 to 27 is disordered; the sequence is MSSKPQSIGVIGAPFSKGQPRGGVEEG. The residue at position 7 (serine 7) is a Phosphoserine. Lysine 17 is subject to N6-succinyllysine. Serine 62 is modified (phosphoserine). N6-succinyllysine is present on lysine 75. Histidine 101, aspartate 124, histidine 126, and aspartate 128 together coordinate Mn(2+). Substrate-binding positions include 126–130, 137–139, and aspartate 183; these read HTDIN and TGN. The residue at position 217 (serine 217) is a Phosphoserine. Mn(2+) is bound by residues aspartate 232 and aspartate 234. The substrate site is built by threonine 246 and glutamate 277.

This sequence belongs to the arginase family. Homotrimer. Interacts with CMTM6. The cofactor is Mn(2+).

The protein resides in the cytoplasm. The enzyme catalyses L-arginine + H2O = urea + L-ornithine. Its pathway is nitrogen metabolism; urea cycle; L-ornithine and urea from L-arginine: step 1/1. In Bos taurus (Bovine), this protein is Arginase-1 (ARG1).